We begin with the raw amino-acid sequence, 121 residues long: ATP synthase epsilon chain (121 aa).

Belongs to the ATPase epsilon chain family. As to quaternary structure, F-type ATPases have 2 components, CF(1) - the catalytic core - and CF(0) - the membrane proton channel. CF(1) has five subunits: alpha(3), beta(3), gamma(1), delta(1), epsilon(1). CF(0) has three main subunits: a, b and c.

The protein resides in the cell membrane. In terms of biological role, produces ATP from ADP in the presence of a proton gradient across the membrane. This chain is ATP synthase epsilon chain, found in Mycolicibacterium smegmatis (strain ATCC 700084 / mc(2)155) (Mycobacterium smegmatis).